The chain runs to 393 residues: Erythronate-4-phosphate dehydrogenase (393 aa).

Residues Ser-57 and Thr-79 each contribute to the substrate site. Position 159 (Asp-159) interacts with NAD(+). Arg-229 is a catalytic residue. Asp-253 is a binding site for NAD(+). Glu-258 is a catalytic residue. His-275 serves as the catalytic Proton donor. Gly-278 provides a ligand contact to NAD(+). Tyr-279 is a binding site for substrate.

This sequence belongs to the D-isomer specific 2-hydroxyacid dehydrogenase family. PdxB subfamily. Homodimer.

The protein localises to the cytoplasm. The catalysed reaction is 4-phospho-D-erythronate + NAD(+) = (R)-3-hydroxy-2-oxo-4-phosphooxybutanoate + NADH + H(+). The protein operates within cofactor biosynthesis; pyridoxine 5'-phosphate biosynthesis; pyridoxine 5'-phosphate from D-erythrose 4-phosphate: step 2/5. Catalyzes the oxidation of erythronate-4-phosphate to 3-hydroxy-2-oxo-4-phosphonooxybutanoate. The chain is Erythronate-4-phosphate dehydrogenase from Colwellia psychrerythraea (strain 34H / ATCC BAA-681) (Vibrio psychroerythus).